The chain runs to 419 residues: Caspase-12 (419 aa).

One can recognise a CARD domain in the interval 1-92 (MAARRTHERD…QLSLQFSNDE (92 aa)). A Phosphoserine modification is found at serine 85. Residues 88-113 (FSNDEDDGPQKICTPSSPSESKRKVE) form a disordered region. Catalysis depends on residues histidine 250 and cysteine 298.

The protein belongs to the peptidase C14A family. As to quaternary structure, heterotetramer that consists of two anti-parallel arranged heterodimers, each one formed by two subunits (Potential). Interacts with TRAF2 under resting conditions; this interaction is reduced in ER stress conditions. As to expression, mainly expressed in skeletal muscle and lung.

Involved in the activation cascade of caspases responsible for apoptosis execution. The protein is Caspase-12 (Casp12) of Mus musculus (Mouse).